The chain runs to 685 residues: Sodium-dependent phosphate transporter 1 (685 aa).

6 helical membrane passes run 25-45 (FLWM…SVGA), 66-86 (ACIL…AKVS), 106-126 (LMAG…AASF), 162-182 (IVLS…LLFY), 201-221 (ALPI…MYSG), and 234-254 (GIIL…WFFV). The segment covering 482-492 (VEAEEQEEGSI) has biased composition (acidic residues). The tract at residues 482 to 513 (VEAEEQEEGSIEDVATDRKSSSSSLEERHDQD) is disordered. The segment covering 496 to 513 (ATDRKSSSSSLEERHDQD) has biased composition (basic and acidic residues). 4 helical membrane passes run 517–537 (VSLL…FAHG), 565–585 (ATPI…LWVW), 606–626 (FSIE…GLPI), and 656–676 (IFLA…AIMA).

The protein belongs to the inorganic phosphate transporter (PiT) (TC 2.A.20) family.

The protein localises to the cell membrane. The enzyme catalyses 2 Na(+)(out) + phosphate(out) = 2 Na(+)(in) + phosphate(in). Its function is as follows. Sodium-phosphate symporter which preferentially transports the monovalent form of phosphate with a stoichiometry of two sodium ions per phosphate ion. The sequence is that of Sodium-dependent phosphate transporter 1 (slc20a1) from Xenopus tropicalis (Western clawed frog).